The sequence spans 231 residues: Platelet-activating factor acetylhydrolase IB subunit alpha1 (231 aa).

Serine 2 is modified (N-acetylserine). Serine 2 carries the post-translational modification Phosphoserine. Residues serine 47, aspartate 192, and histidine 195 contribute to the active site.

This sequence belongs to the 'GDSL' lipolytic enzyme family. Platelet-activating factor acetylhydrolase IB beta/gamma subunits subfamily. Forms a catalytic dimer which is either homodimer (alpha1/alpha1 homodimer) or heterodimer with PAFAH1B2 (alpha1/alpha2 heterodimer). Component of the cytosolic (PAF-AH (I)) heterotetrameric enzyme, which is composed of PAFAH1B1 (beta), PAFAH1B2 (alpha2) and PAFAH1B3 (alpha1) subunits. The catalytic activity of the enzyme resides in the alpha1 (PAFAH1B3) and alpha2 (PAFAH1B2) subunits, whereas the beta subunit (PAFAH1B1) has regulatory activity. Trimer formation is not essential for the catalytic activity. Interacts with VLDLR; this interaction may modulate the Reelin pathway. In terms of tissue distribution, in the adult, expressed in brain, skeletal muscle, kidney, thymus, spleen, colon, testis, ovary and peripheral blood leukocytes. In the fetus, highest expression occurs in brain.

It localises to the cytoplasm. The catalysed reaction is a 1-O-alkyl-2-acetyl-sn-glycero-3-phosphocholine + H2O = a 1-O-alkyl-sn-glycero-3-phosphocholine + acetate + H(+). It catalyses the reaction 1-O-hexadecyl-2-acetyl-sn-glycero-3-phosphocholine + H2O = 1-O-hexadecyl-sn-glycero-3-phosphocholine + acetate + H(+). It carries out the reaction 1-O-hexadecyl-2-acetyl-sn-glycero-3-phosphate + H2O = 1-O-hexadecyl-sn-glycero-3-phosphate + acetate + H(+). Beta subunit (PAFAH1B1) inhibits the acetylhydrolase activity of the alpha1/alpha1 catalytic homodimer. Its function is as follows. Alpha1 catalytic subunit of the cytosolic type I platelet-activating factor (PAF) acetylhydrolase (PAF-AH (I)) heterotetrameric enzyme that catalyzes the hydrolyze of the acetyl group at the sn-2 position of PAF and its analogs and modulates the action of PAF. The activity and substrate specificity of PAF-AH (I) are affected by its subunit composition. Both alpha1/alpha1 homodimer (PAFAH1B3/PAFAH1B3 homodimer) and alpha1/alpha2 heterodimer(PAFAH1B3/PAFAH1B2 heterodimer) hydrolyze 1-O-alkyl-2-acetyl-sn-glycero-3-phosphoric acid (AAGPA) more efficiently than PAF, but they have little hydrolytic activity towards 1-O-alkyl-2-acetyl-sn-glycero-3-phosphorylethanolamine (AAGPE). Plays an important role during the development of brain. This chain is Platelet-activating factor acetylhydrolase IB subunit alpha1, found in Homo sapiens (Human).